A 251-amino-acid chain; its full sequence is Transcriptional cofactor Bfc (251 aa).

As to quaternary structure, interacts with srp (via GATA-type Zn-finger domain); this interaction enhances srp binding to the promoter of crq/croquemort.

The protein resides in the nucleus. Functionally, transcriptional cofactor involved in efferocytosis. Together with srp mediates expression of the phagocytic receptor crq/croquemort in response to apoptotic cells, and is up-regulated by crq/croquemort in a positive feedback mechanism. Involved in macrophage engulfment and clearance of apoptotic cells during embryogenesis. The chain is Transcriptional cofactor Bfc from Drosophila melanogaster (Fruit fly).